The sequence spans 206 residues: GTP cyclohydrolase 1 (206 aa).

Residues Cys95, His98, and Cys166 each contribute to the Zn(2+) site.

It belongs to the GTP cyclohydrolase I family. In terms of assembly, toroid-shaped homodecamer, composed of two pentamers of five dimers.

The catalysed reaction is GTP + H2O = 7,8-dihydroneopterin 3'-triphosphate + formate + H(+). It functions in the pathway cofactor biosynthesis; 7,8-dihydroneopterin triphosphate biosynthesis; 7,8-dihydroneopterin triphosphate from GTP: step 1/1. This Bartonella henselae (strain ATCC 49882 / DSM 28221 / CCUG 30454 / Houston 1) (Rochalimaea henselae) protein is GTP cyclohydrolase 1.